We begin with the raw amino-acid sequence, 78 residues long: Translational regulator CsrA (78 aa).

It belongs to the CsrA/RsmA family. As to quaternary structure, homodimer; the beta-strands of each monomer intercalate to form a hydrophobic core, while the alpha-helices form wings that extend away from the core.

Its subcellular location is the cytoplasm. A translational regulator that binds mRNA to regulate translation initiation and/or mRNA stability. Usually binds in the 5'-UTR at or near the Shine-Dalgarno sequence preventing ribosome-binding, thus repressing translation. Its main target seems to be the major flagellin gene, while its function is anatagonized by FliW. This is Translational regulator CsrA from Desulfovibrio desulfuricans (strain ATCC 27774 / DSM 6949 / MB).